Here is a 354-residue protein sequence, read N- to C-terminus: S-adenosylmethionine:tRNA ribosyltransferase-isomerase (354 aa).

The protein belongs to the QueA family. In terms of assembly, monomer.

It is found in the cytoplasm. The catalysed reaction is 7-aminomethyl-7-carbaguanosine(34) in tRNA + S-adenosyl-L-methionine = epoxyqueuosine(34) in tRNA + adenine + L-methionine + 2 H(+). It participates in tRNA modification; tRNA-queuosine biosynthesis. Its function is as follows. Transfers and isomerizes the ribose moiety from AdoMet to the 7-aminomethyl group of 7-deazaguanine (preQ1-tRNA) to give epoxyqueuosine (oQ-tRNA). The polypeptide is S-adenosylmethionine:tRNA ribosyltransferase-isomerase (Pseudomonas syringae pv. tomato (strain ATCC BAA-871 / DC3000)).